The primary structure comprises 242 residues: Large ribosomal subunit protein uL1 (242 aa).

It belongs to the universal ribosomal protein uL1 family. Part of the 50S ribosomal subunit.

Functionally, binds directly to 23S rRNA. The L1 stalk is quite mobile in the ribosome, and is involved in E site tRNA release. In terms of biological role, protein L1 is also a translational repressor protein, it controls the translation of the L11 operon by binding to its mRNA. The protein is Large ribosomal subunit protein uL1 of Streptomyces virginiae (Streptomyces cinnamonensis).